A 931-amino-acid chain; its full sequence is Neuropilin-2 (931 aa).

A signal peptide spans 1–20; sequence MDMFPLTWVFLALYFSGHEV. The Extracellular portion of the chain corresponds to 21–864; the sequence is RSQQDPPCGG…EKSWLYTLDP (844 aa). 3 disulfide bridges follow: Cys-28–Cys-55, Cys-83–Cys-105, and Cys-149–Cys-175. CUB domains lie at 28–142 and 149–267; these read CGGR…YEIF and CSKN…YYLI. Residues Asn-152 and Asn-157 are each glycosylated (N-linked (GlcNAc...) asparagine). Ca(2+) contacts are provided by Glu-197, Asp-211, and Asp-252. Cys-208 and Cys-230 are joined by a disulfide. 2 disulfide bridges follow: Cys-277–Cys-427 and Cys-434–Cys-592. 2 F5/8 type C domains span residues 277-427 and 434-592; these read CNVP…LFGC and CSNM…VLGC. The span at 298 to 310 shows a compositional bias: polar residues; sequence TFSDGRWTPQQSR. Residues 298–317 form a disordered region; it reads TFSDGRWTPQQSRLHGDDNG. Residues 601–621 are disordered; it reads VETLGPTVKSEETTTPYPMDE. A glycan (N-linked (GlcNAc...) asparagine) is linked at Asn-629. An MAM domain is found at 642-802; the sequence is SGFNCNFDFP…TDVPLENCME (161 aa). Residues 819 to 854 form a disordered region; that stretch reads THGGEGYEDEIDDEYEGDWSNSSSSTSGAGDPSSGK. A compositionally biased stretch (acidic residues) spans 824 to 835; the sequence is GYEDEIDDEYEG. A compositionally biased stretch (low complexity) spans 836–851; it reads DWSNSSSSTSGAGDPS. A glycan (N-linked (GlcNAc...) asparagine) is linked at Asn-839. A helical membrane pass occupies residues 865–889; that stretch reads ILITIIAMSSLGVLLGATCAGLLLY. Residues 890–931 are Cytoplasmic-facing; that stretch reads CTCSYSGLSSRSCTTLENYNFELYDGLKHKVKINHQKCCSEA.

The protein belongs to the neuropilin family. In terms of assembly, heterodimer with NRP1. Binds PLXNB1. In terms of tissue distribution, expressed in developing CNS, PNS and in some nonneural tissues including limb buds, developing bones, muscles, intestinal epithelium, kidney, lung and submandibular gland.

It is found in the membrane. High affinity receptor for semaphorins 3C, 3F, VEGF-165 and VEGF-145 isoforms of VEGF, and the PLGF-2 isoform of PGF. The sequence is that of Neuropilin-2 (Nrp2) from Mus musculus (Mouse).